We begin with the raw amino-acid sequence, 308 residues long: Ribosomal protein L11 methyltransferase (308 aa).

S-adenosyl-L-methionine is bound by residues Thr-160, Gly-181, Asp-203, and Asn-245.

This sequence belongs to the methyltransferase superfamily. PrmA family.

It is found in the cytoplasm. It carries out the reaction L-lysyl-[protein] + 3 S-adenosyl-L-methionine = N(6),N(6),N(6)-trimethyl-L-lysyl-[protein] + 3 S-adenosyl-L-homocysteine + 3 H(+). Its function is as follows. Methylates ribosomal protein L11. This chain is Ribosomal protein L11 methyltransferase, found in Thermoanaerobacter pseudethanolicus (strain ATCC 33223 / 39E) (Clostridium thermohydrosulfuricum).